The following is a 137-amino-acid chain: Large ribosomal subunit protein uL16 (137 aa).

This sequence belongs to the universal ribosomal protein uL16 family. In terms of assembly, part of the 50S ribosomal subunit.

Binds 23S rRNA and is also seen to make contacts with the A and possibly P site tRNAs. The polypeptide is Large ribosomal subunit protein uL16 (Rhizobium etli (strain CIAT 652)).